A 64-amino-acid chain; its full sequence is Large ribosomal subunit protein bL35c (64 aa).

The protein belongs to the bacterial ribosomal protein bL35 family.

It is found in the plastid. The protein resides in the chloroplast. The chain is Large ribosomal subunit protein bL35c from Trieres chinensis (Marine centric diatom).